A 334-amino-acid polypeptide reads, in one-letter code: GTPase Obg (334 aa).

One can recognise an Obg domain in the interval 1–159 (MRFVDEVVIK…KEVRLELNLL (159 aa)). The region spanning 160–331 (ADIALLGLPN…LAKKLNEFLH (172 aa)) is the OBG-type G domain. GTP is bound by residues 166–173 (GLPNAGKS), 191–195 (FTTMY), 212–215 (DIPG), 282–285 (NKID), and 312–314 (SAA). The Mg(2+) site is built by S173 and T193.

This sequence belongs to the TRAFAC class OBG-HflX-like GTPase superfamily. OBG GTPase family. In terms of assembly, monomer. It depends on Mg(2+) as a cofactor.

The protein resides in the cytoplasm. In terms of biological role, an essential GTPase which binds GTP, GDP and possibly (p)ppGpp with moderate affinity, with high nucleotide exchange rates and a fairly low GTP hydrolysis rate. Plays a role in control of the cell cycle, stress response, ribosome biogenesis and in those bacteria that undergo differentiation, in morphogenesis control. This is GTPase Obg from Francisella philomiragia subsp. philomiragia (strain ATCC 25017 / CCUG 19701 / FSC 153 / O#319-036).